The following is a 602-amino-acid chain: MSKVFESKSLIEEAKSRKKQYETLEEQLNTLKKAFQGVADLGDNFKGNGADNIKDFFQGQAEIVDSWLTLVSAQIAFLNGISGDIKDQELNDSYVETSFLDHELPNGDLKASEIVSAHKEEIDSILSGISDIIDLDMYTLDDYADKMGDAQKIRRDTITAVDKLDESLTTEYQNLESLDNAVLTKYSVLMQATSNGKSASPMYYDKKAFHSNEVYKSVIEVENQGTTYIDAKTQQAEARRLQEKAEEEANKPWYEKTWDGVCNFTGEVTGYYDYKRATEGVDPVTGEKLSTAERVTAGAMAAAGFIPVVGWAGRAFKGGKAIYKTGKAAIAAEHALDAYKTGKSLDILKMTEMGAYGLVASNGFSEAVTGRDMFGNKVSEEKRKQGALEAITIIGGAGLAHYFDRLYQKNAPYVNKVSNESLISNIAKTTEEKQTRLQYLRNKHGVLSKEDLHHRINLRAEVLNELSRIKSSGLTKKQRGPAVAGVLDKKTGNYYFGINNIDGKPPKVLHPLIHDRIVNMPTELKEGYIKTSGAGSHAEVNALNEALLQRPDADLKDLMVYVVSARKINKKMPEGVPMPRCPHCEYITQNTNYIPEALKYGK.

Residues 1–235 (MSKVFESKSL…TTYIDAKTQQ (235 aa)) enclose the LXG domain. Coiled-coil stretches lie at residues 6–41 (ESKS…VADL) and 227–251 (TYID…EANK).

In the N-terminal section; belongs to the LXG family. Probably interacts with cognate immunity protein YwqK but not with non-cognate immunity proteins. The interaction inhibits the toxic activity of YwqJ.

Its subcellular location is the secreted. Its function is as follows. Toxic component of one of 6 LXG toxin-immunity modules in this strain. They promote kin selection, mediate competition in biofilms, and drive spatial segregation of different strains, indicating that LXG toxins may help avoid warfare between strains in biofilms. Mediates intercellular competition during biofilm formation; disruption of the operon disadvantages the bacteria, but overexpression of the cognate immunity protein restores growth in competition with wild-type. Overexpression alone in situ causes growth arrest but not cell lysis; no effect is seen on DNA or rRNA. Co-overexpression with cognate immunity protein YwqK does not cause growth arrest. The toxic effect is dependent on the epsA and tapA operons which are required for biofilm formation. Its toxic effects are probably neutralized by its cognate immunity protein YwqK, but not by immunity proteins specific to other toxins with the LXG domain. May have deaminase activity. This Bacillus subtilis (strain 168) protein is Toxin YwqJ (ywqJ).